A 225-amino-acid polypeptide reads, in one-letter code: 7-cyano-7-deazaguanine synthase (225 aa).

8-18 (VSGGADSATVL) contributes to the ATP binding site. The Zn(2+) site is built by Cys188, Cys198, Cys201, and Cys204.

It belongs to the QueC family. Zn(2+) serves as cofactor.

The catalysed reaction is 7-carboxy-7-deazaguanine + NH4(+) + ATP = 7-cyano-7-deazaguanine + ADP + phosphate + H2O + H(+). The protein operates within purine metabolism; 7-cyano-7-deazaguanine biosynthesis. Its function is as follows. Catalyzes the ATP-dependent conversion of 7-carboxy-7-deazaguanine (CDG) to 7-cyano-7-deazaguanine (preQ(0)). In Rickettsia bellii (strain OSU 85-389), this protein is 7-cyano-7-deazaguanine synthase.